A 321-amino-acid chain; its full sequence is Methionyl-tRNA formyltransferase (321 aa).

Residue glycine 111–proline 114 participates in (6S)-5,6,7,8-tetrahydrofolate binding.

It belongs to the Fmt family.

It catalyses the reaction L-methionyl-tRNA(fMet) + (6R)-10-formyltetrahydrofolate = N-formyl-L-methionyl-tRNA(fMet) + (6S)-5,6,7,8-tetrahydrofolate + H(+). In terms of biological role, attaches a formyl group to the free amino group of methionyl-tRNA(fMet). The formyl group appears to play a dual role in the initiator identity of N-formylmethionyl-tRNA by promoting its recognition by IF2 and preventing the misappropriation of this tRNA by the elongation apparatus. The protein is Methionyl-tRNA formyltransferase of Chlamydia pneumoniae (Chlamydophila pneumoniae).